The chain runs to 309 residues: Aspartate carbamoyltransferase catalytic subunit (309 aa).

Positions 58 and 59 each coordinate carbamoyl phosphate. Residue Lys87 coordinates L-aspartate. 3 residues coordinate carbamoyl phosphate: Arg108, His136, and Gln139. L-aspartate is bound by residues Arg168 and Arg229. Carbamoyl phosphate is bound by residues Leu268 and Pro269.

This sequence belongs to the aspartate/ornithine carbamoyltransferase superfamily. ATCase family. Heterooligomer of catalytic and regulatory chains.

The enzyme catalyses carbamoyl phosphate + L-aspartate = N-carbamoyl-L-aspartate + phosphate + H(+). Its pathway is pyrimidine metabolism; UMP biosynthesis via de novo pathway; (S)-dihydroorotate from bicarbonate: step 2/3. Functionally, catalyzes the condensation of carbamoyl phosphate and aspartate to form carbamoyl aspartate and inorganic phosphate, the committed step in the de novo pyrimidine nucleotide biosynthesis pathway. This chain is Aspartate carbamoyltransferase catalytic subunit, found in Methanosarcina mazei (strain ATCC BAA-159 / DSM 3647 / Goe1 / Go1 / JCM 11833 / OCM 88) (Methanosarcina frisia).